Consider the following 251-residue polypeptide: Vitamin B12 import ATP-binding protein BtuD (251 aa).

Positions 2–236 constitute an ABC transporter domain; sequence IRVNSLQVDS…EVLQSVFGTS (235 aa). An ATP-binding site is contributed by 30–37; sequence GPNGCGKS.

It belongs to the ABC transporter superfamily. Vitamin B12 importer (TC 3.A.1.13.1) family. As to quaternary structure, the complex is composed of two ATP-binding proteins (BtuD), two transmembrane proteins (BtuC) and a solute-binding protein (BtuF).

It is found in the cell inner membrane. The enzyme catalyses an R-cob(III)alamin(out) + ATP + H2O = an R-cob(III)alamin(in) + ADP + phosphate + H(+). Functionally, part of the ABC transporter complex BtuCDF involved in vitamin B12 import. Responsible for energy coupling to the transport system. In Vibrio cholerae serotype O1 (strain ATCC 39541 / Classical Ogawa 395 / O395), this protein is Vitamin B12 import ATP-binding protein BtuD.